Consider the following 212-residue polypeptide: Thymidylate kinase (212 aa).

ATP is bound at residue Gly10–Thr17.

This sequence belongs to the thymidylate kinase family.

The enzyme catalyses dTMP + ATP = dTDP + ADP. In terms of biological role, phosphorylation of dTMP to form dTDP in both de novo and salvage pathways of dTTP synthesis. The protein is Thymidylate kinase of Prochlorococcus marinus (strain AS9601).